Consider the following 254-residue polypeptide: Mitochondrial cardiolipin hydrolase (254 aa).

Residues 1-9 (MERFRWQVA) are Mitochondrial intermembrane-facing. Positions 1–43 (MERFRWQVAAVAAVGLALALEALPSVLCWLRAGRRQQQRPPRR) are required for mitochondrial localization. A helical membrane pass occupies residues 10 to 32 (AVAAVGLALALEALPSVLCWLRA). The Cytoplasmic segment spans residues 33–254 (GRRQQQRPPR…SKCSHHLSQV (222 aa)). Residues 49-82 (PSQVTCTEALLQAPGEAPSGPPAGCRCSLPHGES) form a C3H1-type; atypical zinc finger. The region spanning 155 to 182 (DLGYMHHKFAIVDKKVLITGSLNWTTQA) is the PLD phosphodiesterase domain. Residues His160, Lys162, and Asp167 contribute to the active site.

This sequence belongs to the phospholipase D family. MitoPLD/Zucchini subfamily. In terms of assembly, homodimer. Interacts with MOV10L1. Interacts with MIGA1 and MIGA2; possibly facilitating homodimer formation. Interacts with GK2.

It localises to the mitochondrion outer membrane. The protein localises to the nucleus membrane. It is found in the cell membrane. The protein resides in the golgi apparatus. The catalysed reaction is a cardiolipin + H2O = a 1,2-diacyl-sn-glycero-3-phospho-(1'-sn-glycerol) + a 1,2-diacyl-sn-glycero-3-phosphate + H(+). With respect to regulation, single stranded DNA (ssDNA) hydrolase activity does not depend upon, but is stimulated by the presence of Ca(2+) and Mn(2+). MIGA1 and MIGA2 increase PLD6 self-association affinity and affects the homodimer conformation facilitating its phospholipase activity over the nuclease activity. MYC induces its expression and stimulates its phospholipase activity. Presents phospholipase and nuclease activities, depending on the different physiological conditions. Interaction with Mitoguardin (MIGA1 or MIGA2) affects the dimer conformation, facilitating the lipase activity over the nuclease activity. Plays a key role in mitochondrial fusion and fission via its phospholipase activity. In its phospholipase role, it uses the mitochondrial lipid cardiolipin as substrate to generate phosphatidate (PA or 1,2-diacyl-sn-glycero-3-phosphate), a second messenger signaling lipid. Production of PA facilitates Mitofusin-mediated fusion, whereas the cleavage of PA by the Lipin family of phosphatases produces diacylgycerol (DAG) which promotes mitochondrial fission. Both Lipin and DAG regulate mitochondrial dynamics and membrane fusion/fission, important processes for adapting mitochondrial metabolism to changes in cell physiology. Mitochondrial fusion enables cells to cope with the increased nucleotide demand during DNA synthesis. Mitochondrial function and dynamics are closely associated with biological processes such as cell growth, proliferation, and differentiation. Mediator of MYC activity, promotes mitochondrial fusion and activates AMPK which in turn inhibits YAP/TAZ, thereby inducing cell growth and proliferation. The endonuclease activity plays a critical role in PIWI-interacting RNA (piRNA) biogenesis during spermatogenesis. Implicated in spermatogenesis and sperm fertility in testicular germ cells, its single strand-specific nuclease activity is critical for the biogenesis/maturation of PIWI-interacting RNA (piRNA). MOV10L1 selectively binds to piRNA precursors and funnels them to the endonuclease that catalyzes the first cleavage step of piRNA processing to generate piRNA intermediate fragments that are subsequently loaded to Piwi proteins. Cleaves either DNA or RNA substrates with similar affinity, producing a 5' phosphate end, in this way it participates in the processing of primary piRNA transcripts. piRNAs provide essential protection against the activity of mobile genetic elements. piRNA-mediated transposon silencing is thus critical for maintaining genome stability, in particular in germline cells when transposons are mobilized as a consequence of wide-spread genomic demethylation. PA may act as signaling molecule in the recognition/transport of the precursor RNAs of primary piRNAs. Interacts with tesmin in testes, suggesting a role in spermatogenesis via association with its interacting partner. The protein is Mitochondrial cardiolipin hydrolase (PLD6) of Canis lupus familiaris (Dog).